Consider the following 2422-residue polypeptide: Non-reducing polyketide synthase trt4 (2422 aa).

An N-terminal acylcarrier protein transacylase domain (SAT) region spans residues 14-196 (VLFGPKCPKT…HHSDHTSVVQ (183 aa)). Residues 289-314 (VEPPDSHHNTNTTQDSDVTTNASPLT) are disordered. Polar residues predominate over residues 297 to 312 (NTNTTQDSDVTTNASP). Positions 329–745 (TVPIAVTGMA…GSNAAIVLQE (417 aa)) constitute a Ketosynthase family 3 (KS3) domain. Residues Cys-494, His-629, and His-668 each act as for beta-ketoacyl synthase activity in the active site. The interval 856-1121 (LCFGGQTGNT…CPIDLSGPQA (266 aa)) is malonyl-CoA:ACP transacylase (MAT) domain. Ser-904 acts as the For acyl/malonyl transferase activity in catalysis. An N-terminal hotdog fold region spans residues 1190–1316 (PSLVKLLNND…GKISISSEAN (127 aa)). One can recognise a PKS/mFAS DH domain in the interval 1190 to 1495 (PSLVKLLNND…FTCVSIQSLK (306 aa)). The interval 1191–1494 (SLVKLLNNDG…TFTCVSIQSL (304 aa)) is product template (PT) domain. His-1221 (proton acceptor; for dehydratase activity) is an active-site residue. Positions 1345 to 1495 (SSGLKRSTVY…FTCVSIQSLK (151 aa)) are C-terminal hotdog fold. The Proton donor; for dehydratase activity role is filled by Asp-1402. Positions 1535–1612 (SRSEDGLRVV…GLVQRIFPGG (78 aa)) constitute a Carrier domain. Ser-1572 carries the post-translational modification O-(pantetheine 4'-phosphoryl)serine. Residues 1615-1636 (AHVETHSQPPDKIGITTGDRMP) are disordered. The tract at residues 1774 to 2007 (QHASEHKLLH…GFNWVDWTDN (234 aa)) is methyltransferase (CMeT) domain. Residues 2036–2383 (NAVAEETLVY…LAPHIPTDEY (348 aa)) form a thioesterase (TE) domain region. Catalysis depends on for thioesterase activity residues Ser-2159, Asp-2320, and His-2352.

It catalyses the reaction 3 malonyl-CoA + acetyl-CoA + 2 S-adenosyl-L-methionine = 3,5-dimethylorsellinate + 2 S-adenosyl-L-homocysteine + 3 CO2 + 4 CoA. Its pathway is secondary metabolite biosynthesis; terpenoid biosynthesis. In terms of biological role, non-reducing polyketide synthase; part of the gene cluster that mediates the biosynthesis of terretonin, a fungal meroterpenoid that acts as a mycotoxin. The first step of the pathway is the synthesis of 3,5-dimethylorsellinic acid (DMOA) by the polyketide synthase trt4. DMOA is then prenylated into farnesyl-DMOA by the polyprenyl transferase trt2. Methylation by the methyltransferase trt5 then leads to farnesyl-DMOA methyl ester which is further subject to epoxidation by the FAD-dependent monooxygenase trt8 to yield epoxyfarnesyl-DMOA methyl ester. Cyclization of epoxyfarnesyl-DMOA methyl ester by the terpene cyclase trt1 leads to a tetracycle intermediate which is in turn converted to preterretonin. Dehydrogenase trt9 comes next to transform preterretonin to preterrenoid. The FAD-dependent monooxygenase trt3 is then required for the C-hydroxylation at C16 of preterrenoid to yield terrenoid. The cytochrome P450 trt6 catalyzes three successive oxidations to transform terrenoid into an unstable intermediate, which then undergoes the D-ring expansion and unusual rearrangement of the methoxy group to afford the core skeleton of terretonin. Trt14 catalyzes the D-ring expansion of terretonin involving intramolecular methoxy rearrangement as well as the hydrolysis of the expanded D-ring and the methyl ester moiety. Finally, the nonheme iron-dependent dioxygenase trt7 accomplishes the last two oxidation reactions steps to complete the biosynthesis of terretonin. Terretonin C is produced via spontaneous decarboxylation of the terretonin precursor. Another shunt product of the terretonin biosynthesis is dihydrofarnesyl-DMOA, derived from epoxyfarnesyl-DMOA through hydrolysis of the epoxide. This Aspergillus terreus (strain NIH 2624 / FGSC A1156) protein is Non-reducing polyketide synthase trt4.